We begin with the raw amino-acid sequence, 492 residues long: Glutamate--cysteine ligase A, chloroplastic (492 aa).

C156 and C376 are disulfide-bonded.

Belongs to the carboxylate-amine ligase family. Glutamate--cysteine ligase type 2 subfamily. Homodimer or monomer when oxidized or reduced, respectively. In terms of processing, the Cys-156-Cys-376 disulfide bridge is known to modulate the enzyme activity according to the redox status. The oxidized form constitutes the active enzyme.

The protein resides in the plastid. It is found in the chloroplast. It carries out the reaction L-cysteine + L-glutamate + ATP = gamma-L-glutamyl-L-cysteine + ADP + phosphate + H(+). It functions in the pathway sulfur metabolism; glutathione biosynthesis; glutathione from L-cysteine and L-glutamate: step 1/2. This chain is Glutamate--cysteine ligase A, chloroplastic (GSH1-1), found in Oryza sativa subsp. japonica (Rice).